Consider the following 566-residue polypeptide: Potassium-transporting ATPase potassium-binding subunit (566 aa).

A run of 12 helical transmembrane segments spans residues 6–26, 60–80, 128–148, 167–187, 247–267, 276–296, 331–351, 361–381, 383–403, 423–443, 492–512, and 530–550; these read VALL…LGIA, AAAI…LMLF, LGLT…AFVL, IWRI…LFLA, LTNF…CICF, VGSA…LLIM, FGLW…CGAV, LGGL…GGVG, GWYG…LMIG, IGLL…VILP, LMFV…GALI, and LFVG…FIPA.

Belongs to the KdpA family. As to quaternary structure, the system is composed of three essential subunits: KdpA, KdpB and KdpC.

The protein localises to the cell inner membrane. Part of the high-affinity ATP-driven potassium transport (or Kdp) system, which catalyzes the hydrolysis of ATP coupled with the electrogenic transport of potassium into the cytoplasm. This subunit binds the periplasmic potassium ions and delivers the ions to the membrane domain of KdpB through an intramembrane tunnel. This is Potassium-transporting ATPase potassium-binding subunit from Tolumonas auensis (strain DSM 9187 / NBRC 110442 / TA 4).